Reading from the N-terminus, the 394-residue chain is Succinate--CoA ligase [ADP-forming] subunit beta 1 (394 aa).

Residues 9–237 (RDLFAKHDVP…KAAANPLEAA (229 aa)) form the ATP-grasp domain. Residues lysine 45, 52–54 (GRG), glutamate 92, proline 95, and glutamate 100 contribute to the ATP site. The Mg(2+) site is built by asparagine 192 and aspartate 206. Substrate contacts are provided by residues asparagine 257 and 319-321 (GIT).

Belongs to the succinate/malate CoA ligase beta subunit family. In terms of assembly, heterotetramer of two alpha and two beta subunits. Mg(2+) is required as a cofactor.

The catalysed reaction is succinate + ATP + CoA = succinyl-CoA + ADP + phosphate. It catalyses the reaction GTP + succinate + CoA = succinyl-CoA + GDP + phosphate. The protein operates within carbohydrate metabolism; tricarboxylic acid cycle; succinate from succinyl-CoA (ligase route): step 1/1. In terms of biological role, succinyl-CoA synthetase functions in the citric acid cycle (TCA), coupling the hydrolysis of succinyl-CoA to the synthesis of either ATP or GTP and thus represents the only step of substrate-level phosphorylation in the TCA. The beta subunit provides nucleotide specificity of the enzyme and binds the substrate succinate, while the binding sites for coenzyme A and phosphate are found in the alpha subunit. In Streptomyces coelicolor (strain ATCC BAA-471 / A3(2) / M145), this protein is Succinate--CoA ligase [ADP-forming] subunit beta 1.